A 455-amino-acid polypeptide reads, in one-letter code: Gamma-aminobutyric acid receptor subunit alpha-1 (455 aa).

The N-terminal stretch at 1–27 (MKRLLVLCDCLWAWSLLLNALTERSYG) is a signal peptide. The Extracellular segment spans residues 28-253 (QTSSQDELKD…FHLKRKIGYF (226 aa)). Residue N38 is glycosylated (N-linked (GlcNAc...) asparagine). R94 is a binding site for 4-aminobutanoate. N138 is a glycosylation site (N-linked (GlcNAc...) asparagine). 4-aminobutanoate is bound at residue T157. An intrachain disulfide couples C166 to C180. The chain crosses the membrane as a helical span at residues 254–274 (VIQTYLPCIMTVILSQVSFWL). The Cytoplasmic segment spans residues 275–279 (NRESV). The helical transmembrane segment at 280-301 (PARTVFGVTTVLTMTTLSISAR) threads the bilayer. Over 302 to 311 (NSLPKVAYAT) the chain is Extracellular. The helical transmembrane segment at 312-333 (AMDWFIAVCYAFVFSALIEFAT) threads the bilayer. Residues 334 to 420 (VNYFTKRGYA…TFNSVSKIDR (87 aa)) lie on the Cytoplasmic side of the membrane. Residues 421–440 (LSRIAFPLLFGIFNLVYWAT) form a helical membrane-spanning segment. At 441 to 455 (YLNREPQLKAPTPHQ) the chain is on the extracellular side.

The protein belongs to the ligand-gated ion channel (TC 1.A.9) family. Gamma-aminobutyric acid receptor (TC 1.A.9.5) subfamily. GABRA1 sub-subfamily. As to quaternary structure, heteropentamer, formed by a combination of alpha (GABRA1-6), beta (GABRB1-3), gamma (GABRG1-3), delta (GABRD), epsilon (GABRE), rho (GABRR1-3), pi (GABRP) and theta (GABRQ) subunits, each subunit exhibiting distinct physiological and pharmacological properties. Brain.

The protein resides in the postsynaptic cell membrane. The protein localises to the cell membrane. The catalysed reaction is chloride(in) = chloride(out). Allosterically activated by benzodiazepines, the neuroanesthetic alphaxalone and pentobarbital. Inhibited by the antagonist bicuculline. Potentiated by histamine. In terms of biological role, alpha subunit of the heteropentameric ligand-gated chloride channel gated by gamma-aminobutyric acid (GABA), a major inhibitory neurotransmitter in the brain. GABA-gated chloride channels, also named GABA(A) receptors (GABAAR), consist of five subunits arranged around a central pore and contain GABA active binding site(s) located at the alpha and beta subunit interface(s). When activated by GABA, GABAARs selectively allow the flow of chloride anions across the cell membrane down their electrochemical gradient. Chloride influx into the postsynaptic neuron following GABAAR opening decreases the neuron ability to generate a new action potential, thereby reducing nerve transmission. The GABAARs can also initiate the formation of functional inhibitory GABAergic synapses. GABAARs function also as histamine receptor where histamine binds at the interface of two neighboring beta subunits and potentiates GABA response. This is Gamma-aminobutyric acid receptor subunit alpha-1 (GABRA1) from Gallus gallus (Chicken).